A 301-amino-acid chain; its full sequence is NAD kinase 2 (301 aa).

Aspartate 77 (proton acceptor) is an active-site residue. NAD(+)-binding positions include 77-78 (DG), arginine 82, 151-152 (NE), arginine 162, aspartate 181, and 192-197 (TAYAFS).

The protein belongs to the NAD kinase family. A divalent metal cation is required as a cofactor.

Its subcellular location is the cytoplasm. The catalysed reaction is NAD(+) + ATP = ADP + NADP(+) + H(+). Its function is as follows. Involved in the regulation of the intracellular balance of NAD and NADP, and is a key enzyme in the biosynthesis of NADP. Catalyzes specifically the phosphorylation on 2'-hydroxyl of the adenosine moiety of NAD to yield NADP. The sequence is that of NAD kinase 2 from Streptomyces avermitilis (strain ATCC 31267 / DSM 46492 / JCM 5070 / NBRC 14893 / NCIMB 12804 / NRRL 8165 / MA-4680).